The chain runs to 257 residues: Zinc transporter ZupT (257 aa).

3 helical membrane passes run 5 to 25, 32 to 52, and 61 to 81; these read LILT…GVLG, LLAF…LMEM, and GMSP…YFGL. Positions 120 and 123 each coordinate Fe(2+). Zn(2+)-binding residues include Glu123 and His148. 4 helical membrane-spanning segments follow: residues 137–157, 171–191, 195–215, and 236–256; these read LGFG…LAVA, ILWA…AWLI, MISP…MVAL, and GVLC…TAGI. Fe(2+)-binding residues include Asn149, Glu152, and Glu181. Glu152 contributes to the Zn(2+) binding site.

Belongs to the ZIP transporter (TC 2.A.5) family. ZupT subfamily.

It is found in the cell inner membrane. It carries out the reaction Zn(2+)(in) = Zn(2+)(out). Functionally, mediates zinc uptake. May also transport other divalent cations. The sequence is that of Zinc transporter ZupT from Escherichia coli O45:K1 (strain S88 / ExPEC).